We begin with the raw amino-acid sequence, 275 residues long: Large ribosomal subunit protein uL2 (275 aa).

Residues 223 to 260 (VAMNPVDHPHGGGEGRTSGGRHPVSPWGLPTKGYKTRS) form a disordered region.

This sequence belongs to the universal ribosomal protein uL2 family. In terms of assembly, part of the 50S ribosomal subunit. Forms a bridge to the 30S subunit in the 70S ribosome.

One of the primary rRNA binding proteins. Required for association of the 30S and 50S subunits to form the 70S ribosome, for tRNA binding and peptide bond formation. It has been suggested to have peptidyltransferase activity; this is somewhat controversial. Makes several contacts with the 16S rRNA in the 70S ribosome. In Legionella pneumophila (strain Paris), this protein is Large ribosomal subunit protein uL2.